Consider the following 392-residue polypeptide: p21-activated protein kinase-interacting protein 1 (392 aa).

WD repeat units lie at residues 40-77 (AHTA…DHGA), 80-118 (HHNG…CLKS), 121-160 (AHKG…SAFI), 202-240 (TNER…CLSE), and 243-284 (AHEN…KVSP). The tract at residues 309–392 (TKESPPAAAE…RKKKKIRMMQ (84 aa)) is disordered. Residues 325–351 (EQSRRNKEESGHAVQEEEKQPKPDTEK) are compositionally biased toward basic and acidic residues. A compositionally biased stretch (polar residues) spans 355–368 (TGDSNKPTRGNSLV). Residues 381 to 392 (KKRKKKKIRMMQ) are compositionally biased toward basic residues.

Interacts with PAK1.

The protein localises to the nucleus. It localises to the nucleolus. Functionally, negatively regulates the PAK1 kinase. PAK1 is a member of the PAK kinase family, which has been shown to play a positive role in the regulation of signaling pathways involving MAPK8 and RELA. PAK1 exists as an inactive homodimer, which is activated by binding of small GTPases such as CDC42 to an N-terminal regulatory domain. PAK1IP1 also binds to the N-terminus of PAK1, and inhibits the specific activation of PAK1 by CDC42. May be involved in ribosomal large subunit assembly. The sequence is that of p21-activated protein kinase-interacting protein 1 (PAK1IP1) from Bos taurus (Bovine).